A 78-amino-acid chain; its full sequence is Small ribosomal subunit protein bS16c (78 aa).

Belongs to the bacterial ribosomal protein bS16 family.

The protein resides in the plastid. It localises to the chloroplast. This is Small ribosomal subunit protein bS16c from Phaeodactylum tricornutum (strain CCAP 1055/1).